The primary structure comprises 72 residues: Large ribosomal subunit protein bL28 (72 aa).

It belongs to the bacterial ribosomal protein bL28 family.

The chain is Large ribosomal subunit protein bL28 from Pelodictyon phaeoclathratiforme (strain DSM 5477 / BU-1).